The primary structure comprises 203 residues: Translation initiation factor IF-3 (203 aa).

A compositionally biased stretch (basic and acidic residues) spans 172-182 (EAPKNEKKTKE). The segment at 172–203 (EAPKNEKKTKENNPPFNRINLMKGENHAKNED) is disordered.

The protein belongs to the IF-3 family. In terms of assembly, monomer.

It localises to the cytoplasm. Functionally, IF-3 binds to the 30S ribosomal subunit and shifts the equilibrium between 70S ribosomes and their 50S and 30S subunits in favor of the free subunits, thus enhancing the availability of 30S subunits on which protein synthesis initiation begins. The chain is Translation initiation factor IF-3 from Helicobacter pylori (strain J99 / ATCC 700824) (Campylobacter pylori J99).